A 271-amino-acid polypeptide reads, in one-letter code: Formamidopyrimidine-DNA glycosylase (271 aa).

The active-site Schiff-base intermediate with DNA is P2. The active-site Proton donor is E3. K57 acts as the Proton donor; for beta-elimination activity in catalysis. Residues H90, R109, and K151 each contribute to the DNA site. An FPG-type zinc finger spans residues 236 to 270 (HVYGRGGETCTECGHLLSEIRLGQRTTVFCSLCQT). Residue R260 is the Proton donor; for delta-elimination activity of the active site.

This sequence belongs to the FPG family. Monomer. It depends on Zn(2+) as a cofactor.

The catalysed reaction is Hydrolysis of DNA containing ring-opened 7-methylguanine residues, releasing 2,6-diamino-4-hydroxy-5-(N-methyl)formamidopyrimidine.. It catalyses the reaction 2'-deoxyribonucleotide-(2'-deoxyribose 5'-phosphate)-2'-deoxyribonucleotide-DNA = a 3'-end 2'-deoxyribonucleotide-(2,3-dehydro-2,3-deoxyribose 5'-phosphate)-DNA + a 5'-end 5'-phospho-2'-deoxyribonucleoside-DNA + H(+). Involved in base excision repair of DNA damaged by oxidation or by mutagenic agents. Acts as a DNA glycosylase that recognizes and removes damaged bases. Has a preference for oxidized purines, such as 7,8-dihydro-8-oxoguanine (8-oxoG). Has AP (apurinic/apyrimidinic) lyase activity and introduces nicks in the DNA strand. Cleaves the DNA backbone by beta-delta elimination to generate a single-strand break at the site of the removed base with both 3'- and 5'-phosphates. In Shewanella amazonensis (strain ATCC BAA-1098 / SB2B), this protein is Formamidopyrimidine-DNA glycosylase.